The primary structure comprises 220 residues: MLTSRRWAVIYTRTSERNCGGAWCTNGVRRRRQVHLPSVRARAMFPDRWHEYTACGAVIEGTRLLCFKVPLNAELFEYVTSDEDRWTAASVLARHSALGAVIDLTNTARYYDGAQMVKMGLLYKKIRVPGRAVPDDDIVAEFIETVDEFFRRCPTMLVAVHWTHGLNRSGYLVCRYMVERLGVSPTDAIARFETARGHKIERTNYLQDLLARKHVRGQPN.

A Tyrosine-protein phosphatase domain is found at 67-218 (FKVPLNAELF…LLARKHVRGQ (152 aa)).

It belongs to the protein-tyrosine phosphatase family. Non-receptor class CDC14 subfamily.

It carries out the reaction O-phospho-L-tyrosyl-[protein] + H2O = L-tyrosyl-[protein] + phosphate. Its function is as follows. Could be inactive as the active site cysteine is modified to tryptophan. In Orgyia pseudotsugata multicapsid polyhedrosis virus (OpMNPV), this protein is Putative tyrosine-protein phosphatase 1 (PTP-1).